The chain runs to 218 residues: Elongation factor Ts (218 aa).

The tract at residues T82 to V85 is involved in Mg(2+) ion dislocation from EF-Tu.

Belongs to the EF-Ts family.

The protein localises to the cytoplasm. Associates with the EF-Tu.GDP complex and induces the exchange of GDP to GTP. It remains bound to the aminoacyl-tRNA.EF-Tu.GTP complex up to the GTP hydrolysis stage on the ribosome. This is Elongation factor Ts from Prochlorococcus marinus (strain MIT 9215).